The primary structure comprises 20 residues: Non-specific lipid-transfer protein-like protein (20 aa).

This sequence belongs to the plant LTP family.

The sequence is that of Non-specific lipid-transfer protein-like protein from Jatropha curcas (Barbados nut).